We begin with the raw amino-acid sequence, 458 residues long: tRNA-2-methylthio-N(6)-dimethylallyladenosine synthase (458 aa).

In terms of domain architecture, MTTase N-terminal spans 3–120; it reads QKLYIETFGC…LPSMLEQVRC (118 aa). [4Fe-4S] cluster is bound by residues Cys12, Cys49, Cys83, Cys157, Cys161, and Cys164. Residues 143–375 enclose the Radical SAM core domain; sequence RADGPKAFVS…QAKIADNAAK (233 aa). The TRAM domain maps to 378–441; it reads ASMVGSIQSV…PNSLRGRLIG (64 aa).

It belongs to the methylthiotransferase family. MiaB subfamily. As to quaternary structure, monomer. It depends on [4Fe-4S] cluster as a cofactor.

It localises to the cytoplasm. It catalyses the reaction N(6)-dimethylallyladenosine(37) in tRNA + (sulfur carrier)-SH + AH2 + 2 S-adenosyl-L-methionine = 2-methylsulfanyl-N(6)-dimethylallyladenosine(37) in tRNA + (sulfur carrier)-H + 5'-deoxyadenosine + L-methionine + A + S-adenosyl-L-homocysteine + 2 H(+). Functionally, catalyzes the methylthiolation of N6-(dimethylallyl)adenosine (i(6)A), leading to the formation of 2-methylthio-N6-(dimethylallyl)adenosine (ms(2)i(6)A) at position 37 in tRNAs that read codons beginning with uridine. The protein is tRNA-2-methylthio-N(6)-dimethylallyladenosine synthase of Methylococcus capsulatus (strain ATCC 33009 / NCIMB 11132 / Bath).